The primary structure comprises 367 residues: D-alanine--D-alanine ligase (367 aa).

In terms of domain architecture, ATP-grasp spans 150–357 (KKLLASAGLP…YPTLLATMVE (208 aa)). Position 178 to 233 (178 to 233 (RERLGLPVFVKPSRGGSSIGVSRVTAWDELPAAIELARRHDPKVIIEAAVPGRELE)) interacts with ATP. Residues Asp312, Glu324, and Asn326 each contribute to the Mg(2+) site.

Belongs to the D-alanine--D-alanine ligase family. It depends on Mg(2+) as a cofactor. Mn(2+) is required as a cofactor.

The protein localises to the cytoplasm. The catalysed reaction is 2 D-alanine + ATP = D-alanyl-D-alanine + ADP + phosphate + H(+). It participates in cell wall biogenesis; peptidoglycan biosynthesis. Its function is as follows. Cell wall formation. This chain is D-alanine--D-alanine ligase, found in Mycolicibacterium gilvum (strain PYR-GCK) (Mycobacterium gilvum (strain PYR-GCK)).